A 201-amino-acid polypeptide reads, in one-letter code: Small ribosomal subunit protein uS4 (201 aa).

Positions 26-47 (LSKKNYPPGQHGNNRRRKTSEY) are disordered. Residues 92–154 (ARLDNVVFRL…SKSLEVIADA (63 aa)) form the S4 RNA-binding domain.

Belongs to the universal ribosomal protein uS4 family. In terms of assembly, part of the 30S ribosomal subunit. Contacts protein S5. The interaction surface between S4 and S5 is involved in control of translational fidelity.

One of the primary rRNA binding proteins, it binds directly to 16S rRNA where it nucleates assembly of the body of the 30S subunit. Its function is as follows. With S5 and S12 plays an important role in translational accuracy. In Porphyromonas gingivalis (strain ATCC 33277 / DSM 20709 / CIP 103683 / JCM 12257 / NCTC 11834 / 2561), this protein is Small ribosomal subunit protein uS4.